A 361-amino-acid polypeptide reads, in one-letter code: Molybdenum import ATP-binding protein ModC (361 aa).

In terms of domain architecture, ABC transporter spans 1–235; the sequence is MDGLRLRFRR…VDLPLALDDD (235 aa). 33-40 is an ATP binding site; the sequence is GHSGSGKS. Residues 296–361 form the Mop domain; the sequence is QSSILNRLPV…AQIKSVAVLA (66 aa).

Belongs to the ABC transporter superfamily. Molybdate importer (TC 3.A.1.8) family. As to quaternary structure, the complex is composed of two ATP-binding proteins (ModC), two transmembrane proteins (ModB) and a solute-binding protein (ModA).

Its subcellular location is the cell inner membrane. The enzyme catalyses molybdate(out) + ATP + H2O = molybdate(in) + ADP + phosphate + H(+). Functionally, part of the ABC transporter complex ModABC involved in molybdenum import. Responsible for energy coupling to the transport system. The polypeptide is Molybdenum import ATP-binding protein ModC (Pseudomonas aeruginosa (strain ATCC 15692 / DSM 22644 / CIP 104116 / JCM 14847 / LMG 12228 / 1C / PRS 101 / PAO1)).